The primary structure comprises 759 residues: Putative ATP-dependent DNA helicase YjcD (759 aa).

The interval 68–121 (ACEPKPSKEGKKEDDQESGVIRLPKGKAIAADPSPAVTEWHRPRSIKPGTPFVP) is disordered. Over residues 69–81 (CEPKPSKEGKKED) the composition is skewed to basic and acidic residues. In terms of domain architecture, UvrD-like helicase ATP-binding spans 134–413 (VGLNTDQLKA…IYLTANYRST (280 aa)). ATP is bound by residues 158-163 (GSGKTR) and Arg411. Residues 414–676 (HPIVSSADIV…QLMTIHRSKG (263 aa)) enclose the UvrD-like helicase C-terminal domain.

Belongs to the helicase family. UvrD subfamily.

The protein resides in the cytoplasm. The enzyme catalyses Couples ATP hydrolysis with the unwinding of duplex DNA by translocating in the 3'-5' direction.. It catalyses the reaction ATP + H2O = ADP + phosphate + H(+). May be involved in the generation of recombinogenic substrates for the subsequent action of RecA. The polypeptide is Putative ATP-dependent DNA helicase YjcD (yjcD) (Bacillus subtilis (strain 168)).